Consider the following 142-residue polypeptide: Large ribosomal subunit protein bL17 (142 aa).

Belongs to the bacterial ribosomal protein bL17 family. In terms of assembly, part of the 50S ribosomal subunit. Contacts protein L32.

The chain is Large ribosomal subunit protein bL17 from Chlamydia abortus (strain DSM 27085 / S26/3) (Chlamydophila abortus).